The primary structure comprises 199 residues: Elongation factor Ts (199 aa).

Residues 81–84 (TDFV) form an involved in Mg(2+) ion dislocation from EF-Tu region.

Belongs to the EF-Ts family.

The protein localises to the cytoplasm. Functionally, associates with the EF-Tu.GDP complex and induces the exchange of GDP to GTP. It remains bound to the aminoacyl-tRNA.EF-Tu.GTP complex up to the GTP hydrolysis stage on the ribosome. In Thermotoga petrophila (strain ATCC BAA-488 / DSM 13995 / JCM 10881 / RKU-1), this protein is Elongation factor Ts.